The chain runs to 366 residues: DNA double-strand break repair protein Mre11 (366 aa).

Mn(2+)-binding residues include D8, H10, D49, and N84. Residue H85 is the Proton donor of the active site. Mn(2+) is bound by residues H158, H186, and H188.

It belongs to the MRE11/RAD32 family. As to quaternary structure, homodimer. Forms a heterotetramer composed of two Mre11 subunits and two Rad50 subunits. The cofactor is Mn(2+).

Its activity is regulated as follows. Nuclease activity is regulated by Rad50. Part of the Rad50/Mre11 complex, which is involved in the early steps of DNA double-strand break (DSB) repair. The complex may facilitate opening of the processed DNA ends to aid in the recruitment of HerA and NurA. Mre11 binds to DSB ends and has both double-stranded 3'-5' exonuclease activity and single-stranded endonuclease activity. This Methanocaldococcus jannaschii (strain ATCC 43067 / DSM 2661 / JAL-1 / JCM 10045 / NBRC 100440) (Methanococcus jannaschii) protein is DNA double-strand break repair protein Mre11.